A 278-amino-acid chain; its full sequence is Non-heme chloroperoxidase (278 aa).

In terms of domain architecture, AB hydrolase-1 spans Pro-24–Gly-259. Active-site residues include Ser-97, Asp-229, and His-258.

Belongs to the AB hydrolase superfamily. Bacterial non-heme haloperoxidase / perhydrolase family. Homodimer.

Its function is as follows. Chlorinates and brominates suitable organic compounds. Involved in the biosynthesis of the antibiotic pyrrolnitrin. The sequence is that of Non-heme chloroperoxidase (cpo) from Burkholderia pyrrocinia (Pseudomonas pyrrocinia).